Consider the following 85-residue polypeptide: Small ribosomal subunit protein bS16 (85 aa).

This sequence belongs to the bacterial ribosomal protein bS16 family.

The chain is Small ribosomal subunit protein bS16 from Xanthomonas euvesicatoria pv. vesicatoria (strain 85-10) (Xanthomonas campestris pv. vesicatoria).